We begin with the raw amino-acid sequence, 227 residues long: UPF0758 protein Dhaf_4352 (227 aa).

The MPN domain maps to 105–227 (VINSPQDIAH…YISLKERGIL (123 aa)). Zn(2+)-binding residues include His176, His178, and Asp189. Positions 176–189 (HNHPSGDPTPSSED) match the JAMM motif motif.

Belongs to the UPF0758 family.

The sequence is that of UPF0758 protein Dhaf_4352 from Desulfitobacterium hafniense (strain DSM 10664 / DCB-2).